The primary structure comprises 562 residues: MLTKTNDSRLIDRSSGFDQRTGIYHSLRPSLSLPPIDQPLSAAEFALSLLLKSSPPATAGKNIEALTYLVNSSSGDNLTYGELLRRVRSLAVSLRERFPSLASRNVAFILSPSSLDIPVLYLALMSIGVVVSPANPIGSESEVSHQVEVSEPVIAFATSQTVKKLQSSSLPLGTVLMDSTEFLSWLNRSDSSSVNPFQVQVNQSDPAAILFSSGTTGRVKGVLLTHRNLIASTAVSHQRTLQDPVNYDRVGLFSLPLFHVFGFMMMIRAISLGETLVLLGRFELEAMFKAVEKYKVTGMPVSPPLIVALVKSELTKKYDLRSLRSLGCGGAPLGKDIAERFKQKFPDVDIVQGYGLTESSGPAASTFGPEEMVKYGSVGRISENMEAKIVDPSTGESLPPGKTGELWLRGPVIMKGYVGNEKASAETVDKEGWLKTGDLCYFDSEDFLYIVDRLKELIKYKAYQVPPVELEQILHSNPDVIDAAVVPFPDEDAGEIPMAFIVRKPGSNLNEAQIIDFVAKQVTPYKKVRRVAFINAIPKNPAGKILRRELTKIAVDGNASKL.

ATP is bound by residues Ser212, Ser213, Gly214, Thr215, Thr216, and Lys220. Arg281 lines the CoA pocket. The segment at 283–352 is SBD1; the sequence is ELEAMFKAVE…QKFPDVDIVQ (70 aa). Residues Gln352, Gly353, Thr357, Asp438, and Arg453 each contribute to the ATP site. Residues 353–417 are SBD2; that stretch reads GYGLTESSGP…LRGPVIMKGY (65 aa). Residues Lys461 and Ala462 each coordinate CoA. Lys544 contributes to the ATP binding site. The short motif at 560-562 is the Microbody targeting signal element; that stretch reads SKL.

This sequence belongs to the ATP-dependent AMP-binding enzyme family. The cofactor is Mg(2+). In terms of tissue distribution, expressed at low level in leaves.

The protein resides in the peroxisome. The enzyme catalyses (9S,13S,15Z)-12-oxophyto-10,15-dienoate + ATP + CoA = (10Z,15Z)-12-oxophytodienoyl-CoA + AMP + diphosphate. It catalyses the reaction hexadecanoate + ATP + CoA = hexadecanoyl-CoA + AMP + diphosphate. The catalysed reaction is (9Z)-octadecenoate + ATP + CoA = (9Z)-octadecenoyl-CoA + AMP + diphosphate. It carries out the reaction octadecanoate + ATP + CoA = octadecanoyl-CoA + AMP + diphosphate. The enzyme catalyses tetradecanoate + ATP + CoA = tetradecanoyl-CoA + AMP + diphosphate. It catalyses the reaction dodecanoate + ATP + CoA = dodecanoyl-CoA + AMP + diphosphate. The catalysed reaction is decanoate + ATP + CoA = decanoyl-CoA + AMP + diphosphate. It carries out the reaction octanoate + ATP + CoA = octanoyl-CoA + AMP + diphosphate. The enzyme catalyses (9Z,12Z)-octadecadienoate + ATP + CoA = (9Z,12Z)-octadecadienoyl-CoA + AMP + diphosphate. It catalyses the reaction (9Z,12Z,15Z)-octadecatrienoate + ATP + CoA = (9Z,12Z,15Z)-octadecatrienoyl-CoA + AMP + diphosphate. The catalysed reaction is nonanoate + ATP + CoA = nonanoyl-CoA + AMP + diphosphate. Contributes to jasmonic acid biosynthesis by initiating the beta-oxidative chain shortening of its precursors. Converts 12-oxo-phytodienoic acid (OPDA) into OPDA-CoA. Follows a two-step reaction mechanism, wherein the carboxylate substrate first undergoes adenylation by ATP, followed by a thioesterification in the presence of CoA to yield the final CoA thioester. The chain is 4-coumarate--CoA ligase-like 9 from Arabidopsis thaliana (Mouse-ear cress).